The chain runs to 303 residues: N-acetyl-D-glucosamine kinase (303 aa).

ATP-binding positions include 4-11 (GFDIGGTK) and 133-140 (GVGGGLIF). 4 residues coordinate Zn(2+): histidine 157, cysteine 177, cysteine 179, and cysteine 184.

It belongs to the ROK (NagC/XylR) family. NagK subfamily.

The enzyme catalyses N-acetyl-D-glucosamine + ATP = N-acetyl-D-glucosamine 6-phosphate + ADP + H(+). It participates in cell wall biogenesis; peptidoglycan recycling. In terms of biological role, catalyzes the phosphorylation of N-acetyl-D-glucosamine (GlcNAc) derived from cell-wall degradation, yielding GlcNAc-6-P. The chain is N-acetyl-D-glucosamine kinase from Escherichia coli O81 (strain ED1a).